The chain runs to 404 residues: Cysteine desulfurase IscS (404 aa).

Residues 75–76 (AT), Asn155, Gln183, and 203–205 (SAH) contribute to the pyridoxal 5'-phosphate site. Residue Lys206 is modified to N6-(pyridoxal phosphate)lysine. Pyridoxal 5'-phosphate is bound at residue Thr243. Cys328 functions as the Cysteine persulfide intermediate in the catalytic mechanism. A [2Fe-2S] cluster-binding site is contributed by Cys328.

This sequence belongs to the class-V pyridoxal-phosphate-dependent aminotransferase family. NifS/IscS subfamily. Homodimer. Forms a heterotetramer with IscU, interacts with other sulfur acceptors. The cofactor is pyridoxal 5'-phosphate.

The protein resides in the cytoplasm. The enzyme catalyses (sulfur carrier)-H + L-cysteine = (sulfur carrier)-SH + L-alanine. It functions in the pathway cofactor biosynthesis; iron-sulfur cluster biosynthesis. In terms of biological role, master enzyme that delivers sulfur to a number of partners involved in Fe-S cluster assembly, tRNA modification or cofactor biosynthesis. Catalyzes the removal of elemental sulfur atoms from cysteine to produce alanine. Functions as a sulfur delivery protein for Fe-S cluster synthesis onto IscU, an Fe-S scaffold assembly protein, as well as other S acceptor proteins. The sequence is that of Cysteine desulfurase IscS from Azotobacter vinelandii (strain DJ / ATCC BAA-1303).